An 810-amino-acid polypeptide reads, in one-letter code: Phospholipase D alpha 1 (810 aa).

Residues 1 to 36 constitute a propeptide that is removed on maturation; the sequence is MAQHLLHGTLHATIYEVDDLHTGGLRSGFFGKILAN. Residues 1-126 enclose the C2 domain; it reads MAQHLLHGTL…IHGEEVDQWV (126 aa). Position 187 (D187) interacts with Ca(2+). The PLD phosphodiesterase 1 domain maps to 327 to 366; it reads AMFTHHQKIVVVDSEMPSRGGSQMRRIVSFVGGIDLCDGR. Active-site residues include H332, K334, and D339. H332 is an a 1,2-diacyl-sn-glycero-3-phosphate binding site. Ca(2+) is bound by residues H372 and H406. Positions 522 and 661 each coordinate a 1,2-diacyl-sn-glycero-3-phosphate. Positions 656-683 constitute a PLD phosphodiesterase 2 domain; that stretch reads FMIYVHTKMMIVDDEYIIIGSANINQRS. Active-site residues include H661, K663, and D668. E722 contributes to the Ca(2+) binding site.

This sequence belongs to the phospholipase D family. C2-PLD subfamily. It depends on Ca(2+) as a cofactor.

The protein resides in the cytoplasm. Its subcellular location is the membrane. It carries out the reaction a 1,2-diacyl-sn-glycero-3-phosphocholine + H2O = a 1,2-diacyl-sn-glycero-3-phosphate + choline + H(+). Hydrolyzes glycerol-phospholipids at the terminal phosphodiesteric bond. Plays an important role in various cellular processes, including phytohormone action, vesicular trafficking, secretion, cytoskeletal arrangement, meiosis, tumor promotion, pathogenesis, membrane deterioration and senescence. The sequence is that of Phospholipase D alpha 1 (PLD1) from Brassica oleracea var. capitata (Cabbage).